Consider the following 138-residue polypeptide: Large ribosomal subunit protein bL17 (138 aa).

Belongs to the bacterial ribosomal protein bL17 family. Part of the 50S ribosomal subunit. Contacts protein L32.

The protein is Large ribosomal subunit protein bL17 of Solidesulfovibrio magneticus (strain ATCC 700980 / DSM 13731 / RS-1) (Desulfovibrio magneticus).